Consider the following 303-residue polypeptide: Glutathione transport system permease protein GsiD (303 aa).

The next 7 helical transmembrane spans lie at 37 to 57 (QHVA…AIFA), 105 to 125 (LAAG…LGLL), 144 to 164 (LFAF…GSGI), 165 to 185 (ANVI…LVRG), 208 to 228 (TILF…FFTM), 230 to 250 (IGTS…AQPP), and 266 to 286 (VIAP…VLAF). The ABC transmembrane type-1 domain occupies 101 to 290 (AQISLAAGVF…LTVLAFNLLG (190 aa)).

Belongs to the binding-protein-dependent transport system permease family. In terms of assembly, the complex is composed of two ATP-binding proteins (GsiA), two transmembrane proteins (GsiC and GsiD) and a solute-binding protein (GsiB).

The protein resides in the cell inner membrane. Its function is as follows. Part of the ABC transporter complex GsiABCD involved in glutathione import. Probably responsible for the translocation of the substrate across the membrane. In Salmonella paratyphi A (strain ATCC 9150 / SARB42), this protein is Glutathione transport system permease protein GsiD.